Reading from the N-terminus, the 376-residue chain is Heme chaperone HemW (376 aa).

Positions 1 to 233 (MFTLPPISLY…DKLLKKAGYK (233 aa)) constitute a Radical SAM core domain. Tyrosine 10 contacts S-adenosyl-L-methionine. Residues cysteine 16, cysteine 20, and cysteine 23 each contribute to the [4Fe-4S] cluster site. S-adenosyl-L-methionine-binding positions include glycine 66, 67-68 (GT), glutamate 99, glutamine 126, arginine 138, and aspartate 162.

Belongs to the anaerobic coproporphyrinogen-III oxidase family. HemW subfamily. [4Fe-4S] cluster serves as cofactor.

It is found in the cytoplasm. Its function is as follows. Probably acts as a heme chaperone, transferring heme to an unknown acceptor. Binds one molecule of heme per monomer, possibly covalently. Binds 1 [4Fe-4S] cluster. The cluster is coordinated with 3 cysteines and an exchangeable S-adenosyl-L-methionine. The chain is Heme chaperone HemW from Buchnera aphidicola subsp. Acyrthosiphon pisum (strain APS) (Acyrthosiphon pisum symbiotic bacterium).